We begin with the raw amino-acid sequence, 308 residues long: tRNA pseudouridine synthase B (308 aa).

The active-site Nucleophile is D44.

It belongs to the pseudouridine synthase TruB family. Type 1 subfamily.

It catalyses the reaction uridine(55) in tRNA = pseudouridine(55) in tRNA. Functionally, responsible for synthesis of pseudouridine from uracil-55 in the psi GC loop of transfer RNAs. The sequence is that of tRNA pseudouridine synthase B from Nitratidesulfovibrio vulgaris (strain DSM 19637 / Miyazaki F) (Desulfovibrio vulgaris).